Reading from the N-terminus, the 93-residue chain is Neurophysin 1 (93 aa).

7 disulfide bridges follow: C10–C54, C13–C27, C21–C44, C28–C34, C61–C74, C68–C86, and C75–C80.

It belongs to the vasopressin/oxytocin family.

Its function is as follows. Neurophysin 1 specifically binds oxytocin. The protein is Neurophysin 1 of Struthio camelus (Common ostrich).